Consider the following 404-residue polypeptide: MAAVPELLEQQEEDRSKLRSVSVDLNVDPSLQIDIPDALSERDKVKFTVHTKTTLSTFQSPEFSVTRQHEDFVWLHDTLTETTDYAGLIIPPAPTKPDFDGPREKMQKLGEGEGSMTKEEFAKMKQELEAEYLAVFKKTVSTHEVFLQRLSSHPVLSKDRNFHVFLEYDQDLSVRRKNTKEMFGGFFKSVVKSADEVLFSGVKEVDDFFEQEKNFLINYYNRIKDSCAKADKMTRSHKNVADDYIHTAACLHSLALEEPTVIKKYLLKVAELFEKLRKVEGRVSSDEDLKLTELLRYYMLNIEAAKDLLYRRTKALIDYENSNKALDKARLKSKDVKLAETHQQECCQKFEQLSESAKEELINFKRKRVAAFRKNLIEMSELEIKHARNNVSLLQSCIDLFKNN.

Ala-2 carries the post-translational modification N-acetylalanine. Residues 25 to 172 (LNVDPSLQID…HVFLEYDQDL (148 aa)) enclose the PX domain. A 1,2-diacyl-sn-glycero-3-phospho-(1D-myo-inositol-4,5-bisphosphate)-binding positions include 40 to 46 (SERDKVK), 99 to 105 (FDGPREK), and 113 to 116 (EGSM). The interval 169–261 (DQDLSVRRKN…HSLALEEPTV (93 aa)) is interaction with DOCK1. The membrane-binding amphipathic helix stretch occupies residues 183 to 200 (FGGFFKSVVKSADEVLFS). Ser-193 carries the phosphoserine modification. One can recognise a BAR domain in the interval 202-404 (VKEVDDFFEQ…QSCIDLFKNN (203 aa)). Lys-275 is modified (N6-acetyllysine).

Belongs to the sorting nexin family. Forms heterodimers with BAR domain-containing sorting nexins SNX1 and SNX2; does not homodimerize. The heterodimers are proposed to self-assemble into helical arrays on the membrane to stabilize and expand local membrane curvature underlying endosomal tubule formation. Thought to be a component of the originally described retromer complex (also called SNX-BAR retromer) which is a pentamer containing the heterotrimeric retromer cargo-selective complex (CSC), also described as vacuolar protein sorting subcomplex (VPS), and a heterodimeric membrane-deforming subcomplex formed between SNX1 or SNX2 and SNX5 or SNX6 (also called SNX-BAR subcomplex); the respective CSC and SNX-BAR subcomplexes associate with low affinity. Interacts with SNX1, SNX2, VPS26A, VPS29, VPS35, DCTN1, DOCK1, MIB1, PIP5K1C. Interacts with HGS; increased by PIP5K1C kinase activity and by PtdIns(3P) and/or PtdIns(3,4)P2. As to expression, detected in macrophages (at protein level).

The protein localises to the endosome. It is found in the early endosome. The protein resides in the early endosome membrane. Its subcellular location is the cell membrane. It localises to the cytoplasmic vesicle membrane. The protein localises to the cytoplasm. It is found in the cell projection. The protein resides in the phagocytic cup. Its subcellular location is the ruffle. Functionally, involved in several stages of intracellular trafficking. Interacts with membranes containing phosphatidylinositol lipids. Acts in part as component of the retromer membrane-deforming SNX-BAR subcomplex. The SNX-BAR retromer mediates retrograde transport of cargo proteins from endosomes to the trans-Golgi network (TGN) and is involved in endosome-to-plasma membrane transport for cargo protein recycling. The SNX-BAR subcomplex functions to deform the donor membrane into a tubular profile called endosome-to-TGN transport carrier (ETC). Does not have in vitro vesicle-to-membrane remodeling activity. Involved in retrograde transport of lysosomal enzyme receptor IGF2R. May function as link between endosomal transport vesicles and dynactin. Plays a role in the internalization of EGFR after EGF stimulation. Involved in EGFR endosomal sorting and degradation; the function involves PIP5K1C and is retromer-independent. Together with PIP5K1C facilitates HGS interaction with ubiquitinated EGFR, which initiates EGFR sorting to intraluminal vesicles (ILVs) of the multivesicular body for subsequent lysosomal degradation. Involved in E-cadherin sorting and degradation; inhibits PIP5K1C-mediated E-cadherin degradation. Plays a role in macropinocytosis. This is Sorting nexin-5 (Snx5) from Mus musculus (Mouse).